The sequence spans 122 residues: NADH-quinone oxidoreductase subunit A (122 aa).

A run of 3 helical transmembrane segments spans residues 12-32 (ILLF…AGWL), 67-87 (IAIL…WAVV), and 91-111 (IGWF…VGFI).

It belongs to the complex I subunit 3 family. NDH-1 is composed of 14 different subunits. Subunits NuoA, H, J, K, L, M, N constitute the membrane sector of the complex.

Its subcellular location is the cell inner membrane. It catalyses the reaction a quinone + NADH + 5 H(+)(in) = a quinol + NAD(+) + 4 H(+)(out). In terms of biological role, NDH-1 shuttles electrons from NADH, via FMN and iron-sulfur (Fe-S) centers, to quinones in the respiratory chain. The immediate electron acceptor for the enzyme in this species is believed to be ubiquinone. Couples the redox reaction to proton translocation (for every two electrons transferred, four hydrogen ions are translocated across the cytoplasmic membrane), and thus conserves the redox energy in a proton gradient. In Nitrosomonas europaea (strain ATCC 19718 / CIP 103999 / KCTC 2705 / NBRC 14298), this protein is NADH-quinone oxidoreductase subunit A.